Reading from the N-terminus, the 280-residue chain is Inhibitor of growth protein 2 (280 aa).

A coiled-coil region spans residues 48–120; sequence VLRELDNKYQ…VENRARQMEL (73 aa). Residues 122 to 204 are disordered; that stretch reads SQCFQDPAES…KQEREASPVE (83 aa). Basic and acidic residues predominate over residues 130–140; it reads ESERASDKAKM. Residues 181 to 193 are compositionally biased toward basic residues; that stretch reads KKSKSAKKKKRSK. Residue Lys-195 forms a Glycyl lysine isopeptide (Lys-Gly) (interchain with G-Cter in SUMO1) linkage. The PHD-type zinc finger occupies 212-261; that stretch reads PTYCLCNQVSYGEMIGCDNEQCPIEWFHFSCVSLTYKPKGKWYCPKCRGD. Residues Cys-215, Cys-217, Cys-228, Cys-233, His-239, Cys-242, Cys-255, and Cys-258 each coordinate Zn(2+). Residues 258–274 show a composition bias toward basic and acidic residues; it reads CRGDNEKTMDKSTEKTK. The interval 258 to 280 is disordered; that stretch reads CRGDNEKTMDKSTEKTKKDRRSR. Positions 264–280 are PBR; it reads KTMDKSTEKTKKDRRSR.

The protein belongs to the ING family. In terms of assembly, interacts with H3K4me3 and to a lesser extent with H3K4me2. Component of a mSin3A-like complex at least consisting of SIN3A, HDAC1, HDAC2, RBBP4/RbAp48, RBBP7/RbAp46, SAP30 and ING2. Sumoylation enhances its association with SIN3A and is required for binding to some target gene promoters, this is the case for TMEM71. Widely expressed. Higher expressed in colon-cancer tumor than in normal colon tissues.

Its subcellular location is the nucleus. Functionally, seems to be involved in p53/TP53 activation and p53/TP53-dependent apoptotic pathways, probably by enhancing acetylation of p53/TP53. Component of a mSin3A-like corepressor complex, which is probably involved in deacetylation of nucleosomal histones. ING2 activity seems to be modulated by binding to phosphoinositides (PtdInsPs). This chain is Inhibitor of growth protein 2 (ING2), found in Homo sapiens (Human).